The chain runs to 255 residues: 5-oxoprolinase subunit A (255 aa).

This sequence belongs to the LamB/PxpA family. As to quaternary structure, forms a complex composed of PxpA, PxpB and PxpC.

The enzyme catalyses 5-oxo-L-proline + ATP + 2 H2O = L-glutamate + ADP + phosphate + H(+). In terms of biological role, catalyzes the cleavage of 5-oxoproline to form L-glutamate coupled to the hydrolysis of ATP to ADP and inorganic phosphate. In Rhodopseudomonas palustris (strain BisB18), this protein is 5-oxoprolinase subunit A.